A 751-amino-acid chain; its full sequence is MFGSPKRAALAAASLLAVFGNGPSVMAQETSSNNAVVADGKTFALNGENVSYRFRVNETTGDLVSDHFGGSITGNLFPGFGAEALGGWVGLAGRFRREFPDHGRGDFRIPAVRIRQEAGYTVTDLQYQSYSVIPGKPALPGLPSTFGSEEDVTTLVVHLYDNYSSIAVDLSYSIFPKYDAIVRSANVTNKGTQNITVEALSSFSFDFPYEDLEMISLRGDWAREAHRQRRKVEYGLQGFGSSTGFSSHLHNPFLAIVHPSTTESQGEAWGFNLVYTGSFSVDVEKGSQGLTRALLGFNPSQLSWQLGAGETLTSPECVSVYSSDGIGGMSRSFHRLYRNHLIKSKFATSDRPPLLNSWEGLYFDYNESTIYRLAEESAALGVKLFVMDDGWFGDKYPRVSDNAGLGDWVPNPDRFPDGLTPLVEDVTKLKAGNSSTDLRFGLWVEPEMANPNSTLYHEHPDWVLHAGQYPRTLQRNQLVLNLALPEVQDYIIDEITNILNSSAISYVKWDFNRAMHETPSPSNDHEYILGMYRVFDTLTTRFPDVLWEGCASGGGRFDPGVLEYFPQIWTSDNTDALMRITIQLGTSLAYPPSAMGAHLSAVPNAQTGRTIPVKFRGHVAMMGGSFGLELDPAELQEDEKAEVPGLIALAEKVNPIILTGDMWRLRLPEESNWPAVLFISEDGNQAVLFYFQLGPNVNHATPWLRLQGLDPKATYSVDGNGSYSGATLMNMGLQYKFESDYDSKVVFLQKQ.

The N-terminal stretch at 1-27 (MFGSPKRAALAAASLLAVFGNGPSVMA) is a signal peptide. N-linked (GlcNAc...) asparagine glycosylation is found at N49, N57, N162, N186, N194, N366, N433, N452, and N500. The active-site Nucleophile is D510. D572 functions as the Proton donor in the catalytic mechanism. N720 carries N-linked (GlcNAc...) asparagine glycosylation.

The protein belongs to the glycosyl hydrolase 36 family. Homotetramer. The cofactor is Mg(2+). It depends on NAD(+) as a cofactor.

It is found in the secreted. It catalyses the reaction Hydrolysis of terminal, non-reducing alpha-D-galactose residues in alpha-D-galactosides, including galactose oligosaccharides, galactomannans and galactolipids.. Its function is as follows. Hydrolyzes a variety of simple alpha-D-galactoside as well as more complex molecules such as oligosaccharides and polysaccharides. The chain is Probable alpha-galactosidase C (aglC) from Aspergillus oryzae (strain ATCC 42149 / RIB 40) (Yellow koji mold).